The sequence spans 449 residues: Sulfite exporter TauE/SafE family protein 5 (449 aa).

12 consecutive transmembrane segments (helical) span residues 1–21 (MKTL…NANQ), 57–77 (AIIM…AGGI), 78–98 (GGGG…LKTA), 101–121 (FSAF…LFGG), 127–147 (YDLA…GVIC), 150–170 (VLPE…SSLK), 224–244 (IPWT…VIYL), 259–279 (PCGV…LIFT), 315–335 (AMSF…GMLI), 353–373 (TSFM…LLGM), 378–398 (TAYV…VLVQ), and 409–429 (IIVF…TSFG).

This sequence belongs to the 4-toluene sulfonate uptake permease (TSUP) (TC 2.A.102) family.

Its subcellular location is the membrane. This chain is Sulfite exporter TauE/SafE family protein 5, found in Arabidopsis thaliana (Mouse-ear cress).